Consider the following 430-residue polypeptide: Asparagine--tRNA ligase (430 aa).

This sequence belongs to the class-II aminoacyl-tRNA synthetase family. Homodimer.

It is found in the cytoplasm. The catalysed reaction is tRNA(Asn) + L-asparagine + ATP = L-asparaginyl-tRNA(Asn) + AMP + diphosphate + H(+). This chain is Asparagine--tRNA ligase, found in Bacillus licheniformis (strain ATCC 14580 / DSM 13 / JCM 2505 / CCUG 7422 / NBRC 12200 / NCIMB 9375 / NCTC 10341 / NRRL NRS-1264 / Gibson 46).